A 604-amino-acid chain; its full sequence is ATP-dependent RNA helicase DBP1 (604 aa).

The disordered stretch occupies residues 1 to 79 (MSDGSGRYVP…RASGSGGFGG (79 aa)). Positions 32-45 (SRYSGNGFFSSPNR) are enriched in polar residues. The Q motif motif lies at 138 to 166 (TEFKSPPLDELLLENVELANFSKPTPVQK). A Helicase ATP-binding domain is found at 169-358 (IPIVTKNRDL…RDFLKDYIFL (190 aa)). 182–189 (AQTGSGKT) contributes to the ATP binding site. The DEAD box motif lies at 302–305 (DEAD). Positions 386-529 (LLDILINEID…EVPQFLVNMV (144 aa)) constitute a Helicase C-terminal domain. The segment at 535-591 (FGRGGRNSRTGSNRGRGSNTRDYRHSNKDDWGSLGSSRRGFRSNDNRGFGNNWGSSS) is disordered. Over residues 541-552 (NSRTGSNRGRGS) the composition is skewed to low complexity. Basic and acidic residues predominate over residues 553–565 (NTRDYRHSNKDDW).

Belongs to the DEAD box helicase family. DDX3/DED1 subfamily.

It localises to the cytoplasm. It carries out the reaction ATP + H2O = ADP + phosphate + H(+). Functionally, ATP-binding RNA helicase involved in translation initiation. Remodels RNA in response to ADP and ATP concentrations by facilitating disruption, but also formation of RNA duplexes. Redundant to DED1, may be required in conditions in which DED1 expression is decreased. This chain is ATP-dependent RNA helicase DBP1 (DBP1), found in Candida glabrata (strain ATCC 2001 / BCRC 20586 / JCM 3761 / NBRC 0622 / NRRL Y-65 / CBS 138) (Yeast).